The following is a 310-amino-acid chain: MAPTPNRTPIVAVVGATASGKTGLSLDLAERLRGEIVNTDAMQVYRGMDIGTAKLPVAERRGIPHHLLDTLTVRDPATVAEFQSWARAEIAEIRGRGRTPVLVGGSALYTRAILDRFEFPGTDEAVRRRLEAELDALGPAALHERLRAVDPEAATRILVENGRRIVRALEVVEITGRPFTASLPTMEYADPRTVQVGVDIDRPTLDARIVARVDAMFAAGFVEEVERLLAEGLAEGRTAGRAIGYREVASYLTGELSLAEARERTVSATRRFSRRQDSWFRKDPRVTWIRYDDPGLVDRAVSVVAATLDG.

15–22 (GATASGKT) is a binding site for ATP. 17-22 (TASGKT) lines the substrate pocket.

It belongs to the IPP transferase family. In terms of assembly, monomer. Requires Mg(2+) as cofactor.

The enzyme catalyses adenosine(37) in tRNA + dimethylallyl diphosphate = N(6)-dimethylallyladenosine(37) in tRNA + diphosphate. In terms of biological role, catalyzes the transfer of a dimethylallyl group onto the adenine at position 37 in tRNAs that read codons beginning with uridine, leading to the formation of N6-(dimethylallyl)adenosine (i(6)A). This Nocardioides sp. (strain ATCC BAA-499 / JS614) protein is tRNA dimethylallyltransferase.